Here is a 334-residue protein sequence, read N- to C-terminus: MSGFYHKHFLKLLDFTPAELNSLLQLAAKLKADKKSGKEEAKLTGKNIALIFEKDSTRTRCSFEVAAYDQGARVTYLGPSGSQIGHKESIKDTARVLGRMYDGIQYRGYGQEIVETLAEYAGVPVWNGLTNEFHPTQLLADLLTMQEHLPGKPFNEMTLVYAGDARNNMGNSMLEAAALTGLDLRLVAPQACWPEAALVTECRALAQQNGGNITLTEDVAKGVEGADFIYTDVWVSMGEAKEKWAERIALLRDYQVNSKMMQLTGNPEVKFLHCLPAFHDDQTTLGKKMAEEFGLHGGMEVTDEVFESAASIVFDQAENRMHTIKAVMVATLSK.

Carbamoyl phosphate-binding positions include 56–59 (STRT), Gln-83, Arg-107, and 134–137 (HPTQ). L-ornithine-binding positions include Asn-168, Asp-232, and 236-237 (SM). Residues 274–275 (CL) and Arg-320 contribute to the carbamoyl phosphate site.

It belongs to the aspartate/ornithine carbamoyltransferase superfamily. OTCase family.

Its subcellular location is the cytoplasm. The enzyme catalyses carbamoyl phosphate + L-ornithine = L-citrulline + phosphate + H(+). Its pathway is amino-acid biosynthesis; L-arginine biosynthesis; L-arginine from L-ornithine and carbamoyl phosphate: step 1/3. In terms of biological role, reversibly catalyzes the transfer of the carbamoyl group from carbamoyl phosphate (CP) to the N(epsilon) atom of ornithine (ORN) to produce L-citrulline. The polypeptide is Ornithine carbamoyltransferase (Escherichia coli O157:H7).